A 60-amino-acid polypeptide reads, in one-letter code: Large ribosomal subunit protein uL30 (60 aa).

The protein belongs to the universal ribosomal protein uL30 family. As to quaternary structure, part of the 50S ribosomal subunit.

This Xanthobacter autotrophicus (strain ATCC BAA-1158 / Py2) protein is Large ribosomal subunit protein uL30.